Reading from the N-terminus, the 545-residue chain is E3 ubiquitin-protein ligase ipaH9.8 (545 aa).

An interaction with target proteins region spans residues 1 to 242 (MLPINNNFSL…YHGPRIYFSM (242 aa)). 8 LRR repeats span residues 57–77 (NSDE…NLPA), 78–99 (QITL…PVTL), 100–117 (KKLY…VLPP), 118–139 (ALES…PDSL), 140–157 (LTMN…SLPL), 158–179 (ALKN…SEGN), 182–203 (VVRE…ILNL), and 205–228 (NECS…QRLT). Residues 243–250 (SDGQQNTL) form a linker region. Positions 251-545 (HRPLADAVTA…SENGSQLHHS (295 aa)) are E3 ubiquitin-protein ligase catalytic domain. The NEL domain occupies 253-545 (PLADAVTAWF…SENGSQLHHS (293 aa)). Cysteine 337 (glycyl thioester intermediate) is an active-site residue.

This sequence belongs to the LRR-containing bacterial E3 ligase family. Also interacts with human and mouse U2AF1 (U2AF35). In terms of processing, ubiquitinated in the presence of host E1 ubiquitin-activating enzyme, E2 ubiquitin-conjugating enzyme and ubiquitin.

The protein resides in the secreted. It is found in the host cytoplasm. Its subcellular location is the host nucleus. The catalysed reaction is S-ubiquitinyl-[E2 ubiquitin-conjugating enzyme]-L-cysteine + [acceptor protein]-L-lysine = [E2 ubiquitin-conjugating enzyme]-L-cysteine + N(6)-ubiquitinyl-[acceptor protein]-L-lysine.. Exists in an autoinhibited state in the absence of substrate protein, due to interactions of the leucine-rich repeats with NEL domain. Is activated upon binding to a substrate protein. Its function is as follows. Effector E3 ubiquitin ligase that interferes with host's ubiquitination pathway and modulates the acute inflammatory responses, thus facilitating bacterial colonization within the host cell. Interacts with IKBKG (NEMO) and TNIP1 (ABIN-1), a ubiquitin-binding adapter protein, which results in TNIP1-dependent 'Lys-27'-linked polyubiquitination of IKBKG. Consequently, polyubiquitinated IKBKG undergoes proteasome-dependent degradation, which perturbs NF-kappa-B activation during bacterial infection. Mediates polyubiquitination of host U2AF1, leading to its proteasomal degradation. Catalyzes 'Lys-48'-linked polyubiquitination and subsequent degradation of a subset of host guanylate-binding proteins (GBP1, GBP2, GBP4 and GBP6), thereby suppressing host cell defense. In contrast, host GBP3 and GBP7 are not ubiquitinated by IpaH9.8. Uses UBE2D2 (UBCH5B) as an E2 ubiquitin-conjugating enzyme. The polypeptide is E3 ubiquitin-protein ligase ipaH9.8 (ipaH9.8) (Shigella boydii serotype 4 (strain Sb227)).